We begin with the raw amino-acid sequence, 154 residues long: Superoxide dismutase [Cu-Zn] (154 aa).

The Cu cation site is built by histidine 47, histidine 49, and histidine 64. A disulfide bridge links cysteine 58 with cysteine 147. Residues histidine 64, histidine 72, histidine 81, and aspartate 84 each coordinate Zn(2+). Histidine 121 contributes to the Cu cation binding site. Basic and acidic residues predominate over residues 125–136 (DDLGKGGNEESL). The segment at 125–144 (DDLGKGGNEESLKTGNAGPR) is disordered. Arginine 144 serves as a coordination point for substrate.

This sequence belongs to the Cu-Zn superoxide dismutase family. As to quaternary structure, homodimer. It depends on Cu cation as a cofactor. Requires Zn(2+) as cofactor.

The protein localises to the cytoplasm. It catalyses the reaction 2 superoxide + 2 H(+) = H2O2 + O2. Destroys radicals which are normally produced within the cells and which are toxic to biological systems. The chain is Superoxide dismutase [Cu-Zn] (sod-1) from Neurospora crassa (strain ATCC 24698 / 74-OR23-1A / CBS 708.71 / DSM 1257 / FGSC 987).